Consider the following 303-residue polypeptide: UDP-3-O-acyl-N-acetylglucosamine deacetylase (303 aa).

3 residues coordinate Zn(2+): His78, His237, and Asp241. Residue His264 is the Proton donor of the active site.

The protein belongs to the LpxC family. Zn(2+) is required as a cofactor.

It catalyses the reaction a UDP-3-O-[(3R)-3-hydroxyacyl]-N-acetyl-alpha-D-glucosamine + H2O = a UDP-3-O-[(3R)-3-hydroxyacyl]-alpha-D-glucosamine + acetate. The protein operates within glycolipid biosynthesis; lipid IV(A) biosynthesis; lipid IV(A) from (3R)-3-hydroxytetradecanoyl-[acyl-carrier-protein] and UDP-N-acetyl-alpha-D-glucosamine: step 2/6. Its function is as follows. Catalyzes the hydrolysis of UDP-3-O-myristoyl-N-acetylglucosamine to form UDP-3-O-myristoylglucosamine and acetate, the committed step in lipid A biosynthesis. The chain is UDP-3-O-acyl-N-acetylglucosamine deacetylase from Cellvibrio japonicus (strain Ueda107) (Pseudomonas fluorescens subsp. cellulosa).